Reading from the N-terminus, the 230-residue chain is MTEQLNTSQKRAVILLSGGLDSATVVAMARAEGYACYTMSFDYGQRSHAELHAAARVARDLGVVEHKVIGLNLNGMGGSALTDTSIDIPEELGEGIPVTYVPARNTVFLSLALGWAEVLGARDIFIGVNAVDYSGYPDCRPEFIESFERMANLATKAGVEGNGFRIQAPLQNLSKAQIVQAGVKLGVDYGLTVSCYQADDDGRACGKCDSCRLRAEGFAAAGISDPTRYF.

16-26 serves as a coordination point for ATP; sequence LSGGLDSATVV. 4 residues coordinate Zn(2+): Cys-195, Cys-205, Cys-208, and Cys-211.

The protein belongs to the QueC family. It depends on Zn(2+) as a cofactor.

It catalyses the reaction 7-carboxy-7-deazaguanine + NH4(+) + ATP = 7-cyano-7-deazaguanine + ADP + phosphate + H2O + H(+). The protein operates within purine metabolism; 7-cyano-7-deazaguanine biosynthesis. Its function is as follows. Catalyzes the ATP-dependent conversion of 7-carboxy-7-deazaguanine (CDG) to 7-cyano-7-deazaguanine (preQ(0)). The polypeptide is 7-cyano-7-deazaguanine synthase (Pseudomonas fluorescens (strain Pf0-1)).